We begin with the raw amino-acid sequence, 139 residues long: Angiogenin (139 aa).

The first 21 residues, 1 to 21 (MAMSSLWWTAILLLALTVSMC), serve as a signal peptide directing secretion. His-34 functions as the Proton acceptor in the catalytic mechanism. Disulfide bonds link Cys-49–Cys-102, Cys-64–Cys-111, and Cys-82–Cys-126. TRNA is bound by residues Cys-102 and Val-122. Catalysis depends on His-133, which acts as the Proton donor.

The protein belongs to the pancreatic ribonuclease family. Homodimer. Interacts with RNH1; inhibiting ANG ribonuclease activity.

It is found in the secreted. The protein localises to the nucleus. It localises to the nucleolus. The protein resides in the cytoplasm. Its subcellular location is the stress granule. Secreted ribonuclease that can either promote or restrict cell proliferation of target cells, depending on the context. Endocytosed in target cells via its receptor PLXNB2 and translocates to the cytoplasm or nucleus. Under stress conditions, localizes to the cytoplasm and promotes the assembly of stress granules (SGs): specifically cleaves a subset of tRNAs within anticodon loops to produce tRNA-derived stress-induced fragments (tiRNAs), resulting in translation repression and inhibition of cell proliferation. tiRNas also prevent formation of apoptosome, thereby promoting cell survival. Preferentially cleaves RNAs between a pyrimidine and an adenosine residue, suggesting that it cleaves the anticodon loop of tRNA(Ala) (32-UUAGCAU-38) after positions 33 and 36. Cleaves a subset of tRNAs, including tRNA(Ala), tRNA(Glu), tRNA(Gly), tRNA(Lys), tRNA(Val), tRNA(His), tRNA(Asp) and tRNA(Sec). Under growth conditions and in differentiated cells, translocates to the nucleus and stimulates ribosomal RNA (rRNA) transcription, including that containing the initiation site sequences of 45S rRNA, thereby promoting cell growth and proliferation. Angiogenin induces vascularization of normal and malignant tissues via its ability to promote rRNA transcription. The sequence is that of Angiogenin (ANG) from Gallus gallus (Chicken).